The primary structure comprises 243 residues: Orotidine 5'-phosphate decarboxylase (243 aa).

Residues D16, K38, 65–74 (DLKLHDIPNT), T120, R181, Q190, G210, and R211 contribute to the substrate site. The Proton donor role is filled by K67.

Belongs to the OMP decarboxylase family. Type 1 subfamily. Homodimer.

The catalysed reaction is orotidine 5'-phosphate + H(+) = UMP + CO2. The protein operates within pyrimidine metabolism; UMP biosynthesis via de novo pathway; UMP from orotate: step 2/2. Functionally, catalyzes the decarboxylation of orotidine 5'-monophosphate (OMP) to uridine 5'-monophosphate (UMP). This chain is Orotidine 5'-phosphate decarboxylase, found in Bradyrhizobium sp. (strain BTAi1 / ATCC BAA-1182).